Reading from the N-terminus, the 1085-residue chain is DNA polymerase (1085 aa).

Residues 1059 to 1085 (YDQKRPNPRPQEPLLENPFWDDSSQTA) are disordered.

The protein belongs to the DNA polymerase type-B family. As to quaternary structure, heterodimer with the terminal protein; this heterodimer binds to bp 9 to 18 of the genome. Forms a complex with viral pTP, DBP and hosts NFIA and POU2F1/OCT1 for initiation of replication.

The protein localises to the host nucleus. The catalysed reaction is DNA(n) + a 2'-deoxyribonucleoside 5'-triphosphate = DNA(n+1) + diphosphate. In terms of biological role, eukaryotic-type DNA polymerase involved in viral genomic replication. DNA synthesis is protein primed, and acts in a strand displacement replication. Eukaryotic-type DNA polymerase involved in viral genomic replication. DNA synthesis is protein primed, and acts in a strand displacement replication. Assembles in complex with viral pTP, DBP, host NFIA and host POU2F1/OCT1 on viral origin of replication. The polymerase covalently transfers dCMP onto pTP, thereby initiating complementary strand synthesis. In Pantherophis guttatus (Corn snake), this protein is DNA polymerase.